The chain runs to 404 residues: Probable tRNA sulfurtransferase (404 aa).

One can recognise a THUMP domain in the interval 61 to 166; the sequence is EAISERLKDV…SGYSYIMCGE (106 aa). Residues 184 to 185, 209 to 210, R266, G288, and Q297 contribute to the ATP site; these read LL and HF.

This sequence belongs to the ThiI family.

The protein resides in the cytoplasm. It carries out the reaction [ThiI sulfur-carrier protein]-S-sulfanyl-L-cysteine + a uridine in tRNA + 2 reduced [2Fe-2S]-[ferredoxin] + ATP + H(+) = [ThiI sulfur-carrier protein]-L-cysteine + a 4-thiouridine in tRNA + 2 oxidized [2Fe-2S]-[ferredoxin] + AMP + diphosphate. The enzyme catalyses [ThiS sulfur-carrier protein]-C-terminal Gly-Gly-AMP + S-sulfanyl-L-cysteinyl-[cysteine desulfurase] + AH2 = [ThiS sulfur-carrier protein]-C-terminal-Gly-aminoethanethioate + L-cysteinyl-[cysteine desulfurase] + A + AMP + 2 H(+). Its pathway is cofactor biosynthesis; thiamine diphosphate biosynthesis. In terms of biological role, catalyzes the ATP-dependent transfer of a sulfur to tRNA to produce 4-thiouridine in position 8 of tRNAs, which functions as a near-UV photosensor. Also catalyzes the transfer of sulfur to the sulfur carrier protein ThiS, forming ThiS-thiocarboxylate. This is a step in the synthesis of thiazole, in the thiamine biosynthesis pathway. The sulfur is donated as persulfide by IscS. The chain is Probable tRNA sulfurtransferase from Bacillus cereus (strain G9842).